The following is a 179-amino-acid chain: ATP synthase subunit delta (179 aa).

Belongs to the ATPase delta chain family. As to quaternary structure, F-type ATPases have 2 components, F(1) - the catalytic core - and F(0) - the membrane proton channel. F(1) has five subunits: alpha(3), beta(3), gamma(1), delta(1), epsilon(1). F(0) has three main subunits: a(1), b(2) and c(10-14). The alpha and beta chains form an alternating ring which encloses part of the gamma chain. F(1) is attached to F(0) by a central stalk formed by the gamma and epsilon chains, while a peripheral stalk is formed by the delta and b chains.

The protein resides in the cell membrane. F(1)F(0) ATP synthase produces ATP from ADP in the presence of a proton or sodium gradient. F-type ATPases consist of two structural domains, F(1) containing the extramembraneous catalytic core and F(0) containing the membrane proton channel, linked together by a central stalk and a peripheral stalk. During catalysis, ATP synthesis in the catalytic domain of F(1) is coupled via a rotary mechanism of the central stalk subunits to proton translocation. Its function is as follows. This protein is part of the stalk that links CF(0) to CF(1). It either transmits conformational changes from CF(0) to CF(1) or is implicated in proton conduction. The chain is ATP synthase subunit delta from Clostridium perfringens (strain SM101 / Type A).